The following is a 700-amino-acid chain: Transketolase (700 aa).

His45 provides a ligand contact to substrate. Thiamine diphosphate-binding positions include Thr48, His85, and 133 to 135 (GPL). Asp177 contributes to the Mg(2+) binding site. Residues Gly178 and Asn207 each contribute to the thiamine diphosphate site. Residues Asn207 and Ile209 each contribute to the Mg(2+) site. Substrate-binding residues include His283, Arg378, and Ser405. His283 provides a ligand contact to thiamine diphosphate. The active-site Proton donor is Glu441. Position 467 (Phe467) interacts with thiamine diphosphate. Substrate is bound by residues His491, Asp499, and Arg552.

Belongs to the transketolase family. Homodimer. The cofactor is Mg(2+). Ca(2+) is required as a cofactor. It depends on Mn(2+) as a cofactor. Co(2+) serves as cofactor. Requires thiamine diphosphate as cofactor.

It carries out the reaction D-sedoheptulose 7-phosphate + D-glyceraldehyde 3-phosphate = aldehydo-D-ribose 5-phosphate + D-xylulose 5-phosphate. In terms of biological role, catalyzes the transfer of a two-carbon ketol group from a ketose donor to an aldose acceptor, via a covalent intermediate with the cofactor thiamine pyrophosphate. In Mycobacterium bovis (strain ATCC BAA-935 / AF2122/97), this protein is Transketolase (tkt).